Reading from the N-terminus, the 51-residue chain is Small ribosomal subunit protein eS31 (51 aa).

4 residues coordinate Zn(2+): Cys-22, Cys-25, Cys-40, and Cys-43. The C4-type zinc finger occupies 22 to 43 (CPRCGPGVFMADHGDRWACGRC).

The protein belongs to the eukaryotic ribosomal protein eS31 family. Part of the 30S ribosomal subunit. The cofactor is Zn(2+).

This is Small ribosomal subunit protein eS31 from Pyrococcus abyssi (strain GE5 / Orsay).